We begin with the raw amino-acid sequence, 336 residues long: Porphobilinogen deaminase (336 aa).

Cys-251 is subject to S-(dipyrrolylmethanemethyl)cysteine. A phosphoserine mark is found at Ser-327 and Ser-329.

It belongs to the HMBS family. The cofactor is dipyrromethane.

The enzyme catalyses 4 porphobilinogen + H2O = hydroxymethylbilane + 4 NH4(+). It participates in porphyrin-containing compound metabolism; protoporphyrin-IX biosynthesis; coproporphyrinogen-III from 5-aminolevulinate: step 2/4. Tetrapolymerization of the monopyrrole PBG into the hydroxymethylbilane pre-uroporphyrinogen in several discrete steps. This chain is Porphobilinogen deaminase (hem3), found in Schizosaccharomyces pombe (strain 972 / ATCC 24843) (Fission yeast).